The following is a 1086-amino-acid chain: Calcium-transporting ATPase 9, plasma membrane-type (1086 aa).

The span at 1-15 (MSTSSSNGLLLTSMS) shows a compositional bias: low complexity. Residues 1 to 50 (MSTSSSNGLLLTSMSGRHDDMEAGSAKTEEHSDHEELQHDPDDPFDIDNT) are disordered. Topologically, residues 1–194 (MSTSSSNGLL…NTYPKKKGKN (194 aa)) are cytoplasmic. The segment covering 16–42 (GRHDDMEAGSAKTEEHSDHEELQHDPD) has biased composition (basic and acidic residues). Residues 57 to 68 (SLRRWRQAALVL) form an interaction with calmodulin region. A helical membrane pass occupies residues 195-215 (FFMFLWEAWQDLTLIILIIAA). Residues 216-233 (VTSLALGIKTEGLKEGWL) are Lumenal-facing. A helical membrane pass occupies residues 234-254 (DGGSIAFAVLLVIVVTAVSDY). At 255 to 382 (RQSLQFQNLN…GEETPLQVRL (128 aa)) the chain is on the cytoplasmic side. A helical membrane pass occupies residues 383–402 (NGLATFIGIVGLSVALVVLV). Over 403-439 (ALLVRYFTGTTQDTNGATQFIKGTTSISDIVDDCVKI) the chain is Lumenal. Residues 440–457 (FTIAVTIVVVAVPEGLPL) traverse the membrane as a helical segment. Topologically, residues 458–857 (AVTLTLAYSM…RWGRSVYANI (400 aa)) are cytoplasmic. Aspartate 495 (4-aspartylphosphate intermediate) is an active-site residue. Positions 802 and 806 each coordinate Mg(2+). A helical transmembrane segment spans residues 858–876 (QKFIQFQLTVNVAALIINV). Over 877–887 (VAAMSSGDVPL) the chain is Lumenal. A helical membrane pass occupies residues 888–908 (KAVQLLWVNLIMDTLGALALA). Topologically, residues 909–928 (TEPPTDHLMHRTPVGRREPL) are cytoplasmic. The helical transmembrane segment at 929–951 (ITNIMWRNLLVQSFYQVAVLLVL) threads the bilayer. The Lumenal segment spans residues 952-963 (NFAGLSILGLNH). The helical transmembrane segment at 964-988 (ENHAHAVEVKNTMIFNAFVMCQIFN) threads the bilayer. At 989 to 1006 (EFNARKPDEMNVFRGVNK) the chain is on the cytoplasmic side. A helical membrane pass occupies residues 1007-1028 (NPLFVAIVGVTFILQIIIVTFL). At 1029–1038 (GKFAHTVRLG) the chain is on the lumenal side. A helical transmembrane segment spans residues 1039–1060 (WQLWLASIIIGLVSWPLAIVGK). The Cytoplasmic portion of the chain corresponds to 1061 to 1086 (LIPVPKTPMSVYFKKPFRKYKASRNA).

Belongs to the cation transport ATPase (P-type) (TC 3.A.3) family. Type IIB subfamily.

It is found in the membrane. It catalyses the reaction Ca(2+)(in) + ATP + H2O = Ca(2+)(out) + ADP + phosphate + H(+). With respect to regulation, activated by calmodulin. Functionally, this magnesium-dependent enzyme catalyzes the hydrolysis of ATP coupled with the translocation of calcium from the cytosol out of the cell or into organelles. The protein is Calcium-transporting ATPase 9, plasma membrane-type (ACA9) of Arabidopsis thaliana (Mouse-ear cress).